Reading from the N-terminus, the 237-residue chain is Phosphoribosylaminoimidazole-succinocarboxamide synthase (237 aa).

It belongs to the SAICAR synthetase family.

The enzyme catalyses 5-amino-1-(5-phospho-D-ribosyl)imidazole-4-carboxylate + L-aspartate + ATP = (2S)-2-[5-amino-1-(5-phospho-beta-D-ribosyl)imidazole-4-carboxamido]succinate + ADP + phosphate + 2 H(+). Its pathway is purine metabolism; IMP biosynthesis via de novo pathway; 5-amino-1-(5-phospho-D-ribosyl)imidazole-4-carboxamide from 5-amino-1-(5-phospho-D-ribosyl)imidazole-4-carboxylate: step 1/2. This is Phosphoribosylaminoimidazole-succinocarboxamide synthase from Shigella sonnei (strain Ss046).